The chain runs to 247 residues: ATP synthase subunit a, chloroplastic (247 aa).

Helical transmembrane passes span 38 to 58 (QVLI…IIAV), 95 to 115 (VPFI…GALL), 134 to 154 (INTT…AGLT), 199 to 219 (LVVV…VMFL), and 220 to 240 (GLFT…AYIG).

Belongs to the ATPase A chain family. F-type ATPases have 2 components, CF(1) - the catalytic core - and CF(0) - the membrane proton channel. CF(1) has five subunits: alpha(3), beta(3), gamma(1), delta(1), epsilon(1). CF(0) has four main subunits: a, b, b' and c.

It localises to the plastid. The protein resides in the chloroplast thylakoid membrane. Key component of the proton channel; it plays a direct role in the translocation of protons across the membrane. This is ATP synthase subunit a, chloroplastic from Carica papaya (Papaya).